Reading from the N-terminus, the 563-residue chain is Sperm-tail PG-rich repeat-containing protein 2 (563 aa).

3 STPGR repeats span residues 21–34 (VGPG…PKQQ), 63–73 (PGPAHYNVSQA), and 97–107 (GPGPASYDCPY). A disordered region spans residues 131-163 (IPSIPSSGKSHGYHLNEDDTIMRRTPPSSDKTM). STPGR repeat units follow at residues 200–219 (GPGP…YENI), 250–263 (PGPG…QFDH), 292–321 (TPAP…FGQR), 334–353 (LPGP…QVKK), 423–438 (LPAP…YDMS), 473–483 (GPGPATYNPIL), and 507–518 (SPGPTTYELSPF).

In Rattus norvegicus (Rat), this protein is Sperm-tail PG-rich repeat-containing protein 2 (Stpg2).